Here is a 560-residue protein sequence, read N- to C-terminus: Arginine--tRNA ligase (560 aa).

The 'HIGH' region signature appears at 135–145 (ANPTGLLHMGN).

It belongs to the class-I aminoacyl-tRNA synthetase family. Monomer.

It localises to the cytoplasm. It carries out the reaction tRNA(Arg) + L-arginine + ATP = L-arginyl-tRNA(Arg) + AMP + diphosphate. This is Arginine--tRNA ligase from Moorella thermoacetica (strain ATCC 39073 / JCM 9320).